A 315-amino-acid chain; its full sequence is Porphobilinogen deaminase (315 aa).

Cys-241 is subject to S-(dipyrrolylmethanemethyl)cysteine.

This sequence belongs to the HMBS family. In terms of assembly, monomer. It depends on dipyrromethane as a cofactor.

It carries out the reaction 4 porphobilinogen + H2O = hydroxymethylbilane + 4 NH4(+). It participates in porphyrin-containing compound metabolism; protoporphyrin-IX biosynthesis; coproporphyrinogen-III from 5-aminolevulinate: step 2/4. Tetrapolymerization of the monopyrrole PBG into the hydroxymethylbilane pre-uroporphyrinogen in several discrete steps. The chain is Porphobilinogen deaminase from Nitratidesulfovibrio vulgaris (strain ATCC 29579 / DSM 644 / CCUG 34227 / NCIMB 8303 / VKM B-1760 / Hildenborough) (Desulfovibrio vulgaris).